The chain runs to 293 residues: MFDWRRLKPLRPHQIFFFYTTIQNYSDNGYQYSYKSNQIKSNQIKLNQQQQTSRQLIRINNQLPPSVVLHNIIMKSILITTGATITFKSLIQIILSPQFLNNLIRLKINKLIIQYGHEIKNSINLSESFFNETINKYDLINLFNLEIEETPIGDDDDDEGIRLFKNSDIEILAFSYSSNINKYIENVDLIISHAGTGSIIDCLHLNKPLIVIVNDKLMDNHQLEIAQQFTKLNYCIYYSIKELEQYVNNNDNNKDSRFWNQLNQLINGELQLNKLPQTDGSIIETIICEELEK.

Belongs to the glycosyltransferase 28 family. In terms of assembly, heterodimer with ALG14 to form a functional enzyme.

Its subcellular location is the endoplasmic reticulum. It catalyses the reaction an N-acetyl-alpha-D-glucosaminyl-diphospho-di-trans,poly-cis-dolichol + UDP-N-acetyl-alpha-D-glucosamine = an N,N'-diacetylchitobiosyl-diphospho-di-trans,poly-cis-dolichol + UDP + H(+). Its function is as follows. Involved in protein N-glycosylation. Essential for the second step of the dolichol-linked oligosaccharide pathway. The sequence is that of UDP-N-acetylglucosamine transferase subunit ALG13 (ALG13) from Candida albicans (strain SC5314 / ATCC MYA-2876) (Yeast).